The following is a 26-amino-acid chain: MVYVMSMVSLLKRLLTVTRWKLQITG.

This is an uncharacterized protein from Saccharomyces cerevisiae (strain ATCC 204508 / S288c) (Baker's yeast).